Reading from the N-terminus, the 430-residue chain is Sesquiterpene synthase Agr5 (430 aa).

Positions 1 to 25 (MASSLLEPSLAAIALVILLASVSLS) are cleaved as a signal peptide. Asn-113 carries N-linked (GlcNAc...) asparagine glycosylation. Mg(2+) contacts are provided by Asp-176, Asn-311, Ser-315, and Glu-319. The DDXXD motif motif lies at 176–180 (DEYTD). (2E,6E)-farnesyl diphosphate is bound by residues Arg-401 and Tyr-402.

This sequence belongs to the terpene synthase family. It depends on Mg(2+) as a cofactor.

The enzyme catalyses (2E,6E)-farnesyl diphosphate = viridiflorene + diphosphate. In terms of biological role, terpene cyclase that catalyzes the cyclization of farnesyl diphosphate (FPP) to viridiflorene and viridiflorol. This is Sesquiterpene synthase Agr5 from Cyclocybe aegerita (Black poplar mushroom).